The sequence spans 198 residues: Nucleoside triphosphate pyrophosphatase (198 aa).

Residue D75 is the Proton acceptor of the active site.

This sequence belongs to the Maf family. Requires a divalent metal cation as cofactor.

It localises to the cytoplasm. The catalysed reaction is a ribonucleoside 5'-triphosphate + H2O = a ribonucleoside 5'-phosphate + diphosphate + H(+). It catalyses the reaction a 2'-deoxyribonucleoside 5'-triphosphate + H2O = a 2'-deoxyribonucleoside 5'-phosphate + diphosphate + H(+). Functionally, nucleoside triphosphate pyrophosphatase. May have a dual role in cell division arrest and in preventing the incorporation of modified nucleotides into cellular nucleic acids. The protein is Nucleoside triphosphate pyrophosphatase of Hyphomonas neptunium (strain ATCC 15444).